The primary structure comprises 497 residues: Cytochrome P450 76AD1 (497 aa).

Residues 4–24 (ATLAMILAIWFISFHFIKLLF) form a helical membrane-spanning segment. A heme-binding site is contributed by Cys-439.

Belongs to the cytochrome P450 family. Heme serves as cofactor.

Its subcellular location is the membrane. It functions in the pathway pigment biosynthesis; betalain biosynthesis. Functionally, converts L-DOPA to cyclo-DOPA in the betalain pathway. Provides the cyclo-DOPA moiety of all red betacyanins. This chain is Cytochrome P450 76AD1, found in Beta vulgaris (Sugar beet).